The primary structure comprises 408 residues: Cobalt-precorrin-5B C(1)-methyltransferase (408 aa).

Belongs to the CbiD family.

It carries out the reaction Co-precorrin-5B + S-adenosyl-L-methionine = Co-precorrin-6A + S-adenosyl-L-homocysteine. The protein operates within cofactor biosynthesis; adenosylcobalamin biosynthesis; cob(II)yrinate a,c-diamide from sirohydrochlorin (anaerobic route): step 6/10. Its function is as follows. Catalyzes the methylation of C-1 in cobalt-precorrin-5B to form cobalt-precorrin-6A. The polypeptide is Cobalt-precorrin-5B C(1)-methyltransferase (Clostridioides difficile (strain 630) (Peptoclostridium difficile)).